The following is a 547-amino-acid chain: CTP synthase (547 aa).

Residues 1–265 are amidoligase domain; that stretch reads MARFVFITGG…DQAVLDAFSI (265 aa). A CTP-binding site is contributed by Ser13. A UTP-binding site is contributed by Ser13. ATP is bound by residues 14–19 and Asp71; that span reads SLGKGL. Mg(2+) is bound by residues Asp71 and Glu139. Residues 146–148, 186–191, and Lys222 each bind CTP; these read DIE and KTKPTQ. UTP-binding positions include 186–191 and Lys222; that span reads KTKPTQ. The region spanning 291 to 546 is the Glutamine amidotransferase type-1 domain; the sequence is NVAIVGKYTQ…VRAAKEVSRL (256 aa). An L-glutamine-binding site is contributed by Gly353. Catalysis depends on Cys380, which acts as the Nucleophile; for glutamine hydrolysis. L-glutamine-binding positions include 381 to 384, Glu404, and Arg474; that span reads LGMQ. Active-site residues include His519 and Glu521.

This sequence belongs to the CTP synthase family. In terms of assembly, homotetramer.

The enzyme catalyses UTP + L-glutamine + ATP + H2O = CTP + L-glutamate + ADP + phosphate + 2 H(+). It carries out the reaction L-glutamine + H2O = L-glutamate + NH4(+). The catalysed reaction is UTP + NH4(+) + ATP = CTP + ADP + phosphate + 2 H(+). It functions in the pathway pyrimidine metabolism; CTP biosynthesis via de novo pathway; CTP from UDP: step 2/2. With respect to regulation, allosterically activated by GTP, when glutamine is the substrate; GTP has no effect on the reaction when ammonia is the substrate. The allosteric effector GTP functions by stabilizing the protein conformation that binds the tetrahedral intermediate(s) formed during glutamine hydrolysis. Inhibited by the product CTP, via allosteric rather than competitive inhibition. Functionally, catalyzes the ATP-dependent amination of UTP to CTP with either L-glutamine or ammonia as the source of nitrogen. Regulates intracellular CTP levels through interactions with the four ribonucleotide triphosphates. The sequence is that of CTP synthase from Dinoroseobacter shibae (strain DSM 16493 / NCIMB 14021 / DFL 12).